The sequence spans 384 residues: Potassium channel subfamily K member 18 (384 aa).

At 1–23 the chain is on the cytoplasmic side; sequence MEVSGHPQARRCCPEALGKLFPG. Residues 24–44 form a helical membrane-spanning segment; sequence LCFLCFLVTYALVGAVVFSAI. A glycan (N-linked (GlcNAc...) asparagine) is linked at N70. Residues 103 to 129 constitute an intramembrane region (pore-forming); the sequence is FLSSLFFCCTVFSTVGYGYIYPVTRLG. K(+) contacts are provided by T116, V117, G118, and Y119. The tract at residues 116–121 is selectivity filter 1; that stretch reads TVGYGY. Residues 130 to 148 form a helical membrane-spanning segment; it reads KYLCMLYALFGIPLMFLVL. The Cytoplasmic portion of the chain corresponds to 149–280; it reads TDTGDILATI…EVGQQVERLD (132 aa). The interval 200 to 205 is interaction with calcineurin; sequence PQIIIS. An interaction with YWHAH region spans residues 249–254; the sequence is RSNSCP. S252 and S264 each carry phosphoserine. A helical membrane pass occupies residues 281–301; the sequence is IPLPIIALIVFAYISCAAAIL. Residues 314 to 328 constitute an intramembrane region (pore-forming); that stretch reads FYFCFVTLTTIGFGD. Residues 323–328 are selectivity filter 2; that stretch reads TIGFGD. The helical transmembrane segment at 335–355 threads the bilayer; the sequence is NFFLFFSIYIIVGMEIVFIAF. Residues 356-384 lie on the Cytoplasmic side of the membrane; sequence KLVQNRLIDIYKNVMLFFAKGKFYHLVKK.

The protein belongs to the two pore domain potassium channel (TC 1.A.1.8) family. Homodimer. Heterodimer with KCNK2. Heterodimer with KCNK10. Interacts with calcineurin. Interacts with YWHAH, in a phosphorylation-dependent manner. In terms of processing, N-glycosylated. Post-translationally, phosphorylation of Ser-264 is required for the binding of 14-3-3eta/YWHAH. Calcineurin-mediated dephosphorylation enhances channel activity. As to expression, expressed in dorsal root ganglion and trigeminal ganglion neurons. Detected at low levels in spinal cord. Expressed in regulatory T cells (at protein level).

The protein resides in the cell membrane. The catalysed reaction is K(+)(in) = K(+)(out). With respect to regulation, activated by volatile anesthetics but inhibited by amide local anesthetics. Inhibited by Ba(2+) ions. Inhibited by free polyunsaturated fatty acids. Channel conductance is sensitive to intracellular pH, it decreases at acidic pH and increases at basic pH. In contrast to its mouse ortholog, it is not regulated by extracellular protons. Insensitive to changes in temperature. Its function is as follows. K(+) channel that conducts outward and inward rectifying currents at depolarized and hyperpolarized membrane potentials, respectively. The outward rectifying currents are voltage-dependent, coupled to K(+) electrochemical gradient across the membrane, whereas the inward currents can be induced in response to activation of Ca(2+)-mobilizing receptors. Homo- and heterodimerizes to form functional channels with distinct regulatory and gating properties. In trigeminal ganglia sensory neurons, the heterodimers of KCNK18/TRESK and KCNK2/TREK-1 or KCNK10/TREK-2 inhibit neuronal firing and neurogenic inflammation by stabilizing the resting membrane potential at K(+) equilibrium potential as well as by regulating the threshold of action potentials and the spike frequency. In thymocytes, conducts K(+) currents upon T cell receptor (TCR) signaling leading to sustained Ca(2+) influx and NF-kappa-B activation, FOXP3 transcription and positive selection of regulatory T cell (Treg) progenitor subsets. Appears to mediate the analgesics effects of hydroxy-alpha-sanshool, a metabolite naturally present in Schezuan pepper and other Xanthoxylum plants. This Homo sapiens (Human) protein is Potassium channel subfamily K member 18.